Here is a 985-residue protein sequence, read N- to C-terminus: Rho guanine nucleotide exchange factor 2 (985 aa).

A disordered region spans residues 1 to 32 (MSRIESLTRARIDRSKEQATKTREKEKMKEAK). Residues 39–86 (GHLFTTISVSGMTMCYACNKSITAKEALICPTCNVTIHNRCKDTLANC) form a Phorbol-ester/DAG-type zinc finger. A phosphoserine mark is found at serine 109, serine 122, serine 129, serine 133, and serine 137. Positions 131–161 (RQSLLGSRRGLSSLSLAKSVSTTNIAGHFND) are interaction with DYNLT1. Phosphoserine; by PAK4 is present on serine 143. Phosphoserine is present on residues serine 151, serine 163, serine 172, serine 174, and serine 177. The DH domain occupies 236-433 (KKQDVIYELI…KELLSNVDQD (198 aa)). Lysine 354 carries the N6-acetyllysine modification. The PH domain maps to 473-572 (KLIHDGCLLW…WIRVIQQSVR (100 aa)). A coiled-coil region spans residues 591–615 (LRRIKTKLQQKNQALVELLQMNVEL). A phosphoserine mark is found at serine 646 and serine 649. Threonine 680 is subject to Phosphothreonine; by MAPK1 or MAPK3. Phosphoserine occurs at positions 692, 710, and 781. Threonine 795 is modified (phosphothreonine). Residues 797 to 866 (EKQATELALL…RQLAALGQNE (70 aa)) are a coiled coil. Serine 885 carries the phosphoserine modification. Disordered stretches follow at residues 890–909 (DALY…DRLD) and 918–985 (HRPF…ASES). A Phosphotyrosine modification is found at tyrosine 893. Serine 895 carries the phosphoserine; by PAK4 modification. Residues 919-938 (RPFDDREAQELGSPEDRLQD) are compositionally biased toward basic and acidic residues. Residues serine 931, serine 939, and serine 940 each carry the phosphoserine modification. Acidic residues predominate over residues 940–949 (SDPDTCSEEE). Threonine 944 carries the post-translational modification Phosphothreonine. Phosphoserine occurs at positions 946, 951, 952, 955, and 959.

Found in a complex composed at least of ARHGEF2, NOD2 and RIPK2. Interacts with RIPK2; the interaction mediates tyrosine phosphorylation of RIPK2 by Src kinase CSK. Interacts with RIPK1 and RIPK3. Interacts with YWHAZ/14-3-3 zeta; when phosphorylated at Ser-885. Interacts with the kinases PAK4, AURKA and MAPK1. Interacts with RHOA and RAC1. Interacts with NOD1. Interacts (via the N- terminal zinc finger) with CAPN6 (via domain II). Interacts with DYNLT1. Post-translationally, phosphorylation of Ser-885 by PAK1 induces binding to protein YWHAZ, promoting its relocation to microtubules and the inhibition of its activity. Phosphorylated by AURKA and CDK1 during mitosis, which negatively regulates its activity. Phosphorylation by MAPK1 or MAPK3 increases nucleotide exchange activity. Phosphorylation by PAK4 releases GEF-H1 from the microtubules. Phosphorylated on serine, threonine and tyrosine residues in a RIPK2-dependent manner.

It is found in the cytoplasm. The protein localises to the cytoskeleton. It localises to the cell junction. Its subcellular location is the tight junction. The protein resides in the golgi apparatus. It is found in the spindle. The protein localises to the cytoplasmic vesicle. In terms of biological role, activates Rho-GTPases by promoting the exchange of GDP for GTP. May be involved in epithelial barrier permeability, cell motility and polarization, dendritic spine morphology, antigen presentation, leukemic cell differentiation, cell cycle regulation, innate immune response, and cancer. Binds Rac-GTPases, but does not seem to promote nucleotide exchange activity toward Rac-GTPases. May stimulate instead the cortical activity of Rac. Inactive toward CDC42, TC10, or Ras-GTPases. Forms an intracellular sensing system along with NOD1 for the detection of microbial effectors during cell invasion by pathogens. Involved in innate immune signaling transduction pathway promoting cytokine IL6/interleukin-6 and TNF-alpha secretion in macrophage upon stimulation by bacterial peptidoglycans; acts as a signaling intermediate between NOD2 receptor and RIPK2 kinase. Contributes to the tyrosine phosphorylation of RIPK2 through Src tyrosine kinase leading to NF-kappaB activation by NOD2. Overexpression activates Rho-, but not Rac-GTPases, and increases paracellular permeability. Involved in neuronal progenitor cell division and differentiation. Involved in the migration of precerebellar neurons. The sequence is that of Rho guanine nucleotide exchange factor 2 (Arhgef2) from Rattus norvegicus (Rat).